The sequence spans 556 residues: Endoglucanase 22 (556 aa).

Residues 1 to 33 (MSRGRARLQPPPPGTRTTTLAAVLVLVLLAVVA) form the signal peptide. Aspartate 108 acts as the Nucleophile in catalysis. Residues histidine 450, aspartate 502, and glutamate 511 contribute to the active site.

This sequence belongs to the glycosyl hydrolase 9 (cellulase E) family.

The protein resides in the secreted. The catalysed reaction is Endohydrolysis of (1-&gt;4)-beta-D-glucosidic linkages in cellulose, lichenin and cereal beta-D-glucans.. The protein is Endoglucanase 22 (GLU11) of Oryza sativa subsp. japonica (Rice).